We begin with the raw amino-acid sequence, 322 residues long: UDP-N-acetylenolpyruvoylglucosamine reductase (322 aa).

The 167-residue stretch at 36–202 folds into the FAD-binding PCMH-type domain; sequence RAGGPAQVLF…TSVLFEGVPG (167 aa). Arginine 182 is a catalytic residue. The Proton donor role is filled by serine 231. Glutamate 301 is an active-site residue.

The protein belongs to the MurB family. FAD serves as cofactor.

It is found in the cytoplasm. The enzyme catalyses UDP-N-acetyl-alpha-D-muramate + NADP(+) = UDP-N-acetyl-3-O-(1-carboxyvinyl)-alpha-D-glucosamine + NADPH + H(+). It functions in the pathway cell wall biogenesis; peptidoglycan biosynthesis. Functionally, cell wall formation. The sequence is that of UDP-N-acetylenolpyruvoylglucosamine reductase from Brucella canis (strain ATCC 23365 / NCTC 10854 / RM-666).